Consider the following 1159-residue polypeptide: ATP-dependent helicase/deoxyribonuclease subunit B (1159 aa).

One can recognise a UvrD-like helicase ATP-binding domain in the interval 1 to 401 (MSIRFVYGRS…LLKNWSYESV (401 aa)). 8-15 (GRSGTGKS) is a binding site for ATP. The region spanning 279–582 (PYRFKGNLEL…NIGDIARIKG (304 aa)) is the UvrD-like helicase C-terminal domain. Cysteine 787, cysteine 1106, cysteine 1109, and cysteine 1115 together coordinate [4Fe-4S] cluster.

The protein belongs to the helicase family. AddB/RexB type 1 subfamily. Heterodimer of AddA and AddB. Mg(2+) is required as a cofactor. It depends on [4Fe-4S] cluster as a cofactor.

The heterodimer acts as both an ATP-dependent DNA helicase and an ATP-dependent, dual-direction single-stranded exonuclease. Recognizes the chi site generating a DNA molecule suitable for the initiation of homologous recombination. The AddB subunit has 5' -&gt; 3' nuclease activity but not helicase activity. This Clostridium beijerinckii (strain ATCC 51743 / NCIMB 8052) (Clostridium acetobutylicum) protein is ATP-dependent helicase/deoxyribonuclease subunit B.